The chain runs to 219 residues: Large ribosomal subunit protein uL1 (219 aa).

The protein belongs to the universal ribosomal protein uL1 family. Part of the 50S ribosomal subunit.

Its function is as follows. Probably involved in E site tRNA release. Binds directly to 23S rRNA. Protein L1 is also a translational repressor protein, it controls the translation of its operon by binding to its mRNA. In Methanocaldococcus jannaschii (strain ATCC 43067 / DSM 2661 / JAL-1 / JCM 10045 / NBRC 100440) (Methanococcus jannaschii), this protein is Large ribosomal subunit protein uL1.